Reading from the N-terminus, the 545-residue chain is Thermosome subunit (545 aa).

The protein belongs to the TCP-1 chaperonin family. As to quaternary structure, forms an oligomeric complex of eight-membered rings.

In terms of biological role, molecular chaperone; binds unfolded polypeptides in vitro, and has a weak ATPase activity. The chain is Thermosome subunit (ths) from Methanopyrus kandleri (strain AV19 / DSM 6324 / JCM 9639 / NBRC 100938).